A 257-amino-acid polypeptide reads, in one-letter code: Probable enoyl-CoA hydratase (257 aa).

It belongs to the enoyl-CoA hydratase/isomerase family.

It catalyses the reaction a (3S)-3-hydroxyacyl-CoA = a (2E)-enoyl-CoA + H2O. The catalysed reaction is a 4-saturated-(3S)-3-hydroxyacyl-CoA = a (3E)-enoyl-CoA + H2O. Its function is as follows. Could possibly oxidize fatty acids using specific components. This is Probable enoyl-CoA hydratase (fadB1) from Rhodobacter capsulatus (strain ATCC BAA-309 / NBRC 16581 / SB1003).